We begin with the raw amino-acid sequence, 204 residues long: RNA-free ribonuclease P (204 aa).

It belongs to the HARP family.

It catalyses the reaction Endonucleolytic cleavage of RNA, removing 5'-extranucleotides from tRNA precursor.. Functionally, RNA-free RNase P that catalyzes the removal of the 5'-leader sequence from pre-tRNA to produce the mature 5'-terminus. This Pyrococcus horikoshii (strain ATCC 700860 / DSM 12428 / JCM 9974 / NBRC 100139 / OT-3) protein is RNA-free ribonuclease P.